A 70-amino-acid polypeptide reads, in one-letter code: Fumarase D (70 aa).

The protein belongs to the FumD family.

The enzyme catalyses (S)-malate = fumarate + H2O. Functionally, in vitro catalyzes the addition of water to fumarate, forming malate. Cannot catalyze the reverse reaction. Cannot use the cis-isomer maleate as substrate. The polypeptide is Fumarase D (Salmonella typhi).